Reading from the N-terminus, the 141-residue chain is Nucleoside diphosphate kinase (141 aa).

The ATP site is built by Lys9, Phe57, Arg85, Thr91, Arg102, and Asn112. The active-site Pros-phosphohistidine intermediate is the His115.

It belongs to the NDK family. Homotetramer. Requires Mg(2+) as cofactor.

The protein resides in the cytoplasm. The catalysed reaction is a 2'-deoxyribonucleoside 5'-diphosphate + ATP = a 2'-deoxyribonucleoside 5'-triphosphate + ADP. The enzyme catalyses a ribonucleoside 5'-diphosphate + ATP = a ribonucleoside 5'-triphosphate + ADP. Major role in the synthesis of nucleoside triphosphates other than ATP. The ATP gamma phosphate is transferred to the NDP beta phosphate via a ping-pong mechanism, using a phosphorylated active-site intermediate. This is Nucleoside diphosphate kinase from Chlamydia abortus (strain DSM 27085 / S26/3) (Chlamydophila abortus).